The chain runs to 212 residues: Ribosomal RNA small subunit methyltransferase G (212 aa).

Residues G80, L85, 131–132 (AE), and R146 each bind S-adenosyl-L-methionine.

Belongs to the methyltransferase superfamily. RNA methyltransferase RsmG family.

The protein localises to the cytoplasm. It catalyses the reaction guanosine(527) in 16S rRNA + S-adenosyl-L-methionine = N(7)-methylguanosine(527) in 16S rRNA + S-adenosyl-L-homocysteine. Its function is as follows. Specifically methylates the N7 position of guanine in position 527 of 16S rRNA. In Stenotrophomonas maltophilia (strain K279a), this protein is Ribosomal RNA small subunit methyltransferase G.